A 413-amino-acid chain; its full sequence is Serpin A12 (413 aa).

The signal sequence occupies residues 1 to 20; sequence MTRMLDLGLFLAGLLTVKGL. N-linked (GlcNAc...) asparagine glycans are attached at residues Asn92 and Asn267. Residues 364 to 382 form a reactive center loop region; the sequence is GMEGAAGSGAQTLPMETPR.

Belongs to the serpin family. As to quaternary structure, forms a stable complex with KLK7. Glycosylation slightly decreases affinity for heparin, but otherwise has no significant effect on KLK7 inhibitory activity or thermal stability of the protein. Expressed in visceral adipose tissues.

It is found in the secreted. Its activity is regulated as follows. Inhibition of KLK7 is enhanced by heparin. In terms of biological role, adipokine that modulates insulin action by specifically inhibiting its target protease KLK7 in white adipose tissues. The sequence is that of Serpin A12 (Serpina12) from Mus musculus (Mouse).